The primary structure comprises 451 residues: Cysteine desulfurase (451 aa).

Positions 121, 122, 229, 249, and 251 each coordinate pyridoxal 5'-phosphate. Residue Lys-252 is modified to N6-(pyridoxal phosphate)lysine. Thr-289 contacts pyridoxal 5'-phosphate. The active-site Cysteine persulfide intermediate is Cys-375. Residue Cys-375 participates in [2Fe-2S] cluster binding. Cys-375 is a Zn(2+) binding site. At Cys-375 the chain carries Cysteine persulfide.

The protein belongs to the class-V pyridoxal-phosphate-dependent aminotransferase family. NifS/IscS subfamily. As to quaternary structure, homodimer. Component of the mitochondrial core iron-sulfur cluster (ISC) complex composed of NFS1, LYRM4, NDUFAB1, ISCU, FXN, and FDX2; this complex is a heterohexamer containing two copies of each monomer. Component of cyteine desulfurase complex composed of NFS1, LYRM4 and NDUFAB1; this complex contributes to the activation of cysteine desulfurase activity and NFS1 stabilization. Interacts (homodimer form) with ISCU (D-state); each monomer interacts with the C-terminal regions of each NFS1 monomer. Interacts with HSPA9. Interacts (via homodimer form) with FDX2. Interacts (via homodimer form) with FXN. Interacts with LYRM4. Component of a complex composed of FXN, NFS1, LYRM4 and ISCU. Monomer. Homodimer. Oligomer. Interacts with ISCU. Component of the cysteine desulfurase complex composed of NFS1 and LYRM4; this complex contributes to the activation of cysteine desulfurase activity. Interacts with MOCS3. It depends on pyridoxal 5'-phosphate as a cofactor. Post-translationally, N-gluconoylated. Cysteine persulfide intermediate is reduced by thiol-containing molecules like glutathione and L-cysteine. Persulfide reduction is a rate-limiting step of cysteine desulfurase catalytic cycle.

The protein resides in the mitochondrion. Its subcellular location is the cytoplasm. It is found in the nucleus. The protein localises to the cytoskeleton. It localises to the microtubule organizing center. The protein resides in the centrosome. The enzyme catalyses (sulfur carrier)-H + L-cysteine = (sulfur carrier)-SH + L-alanine. It carries out the reaction L-cysteinyl-[cysteine desulfurase] + L-cysteine = S-sulfanyl-L-cysteinyl-[cysteine desulfurase] + L-alanine. Its activity is regulated as follows. Active only in complex with LYRM4. Functionally, cysteine desulfurase, of the core iron-sulfur cluster (ISC) assembly complex, that catalyzes the desulfuration of L-cysteine to L-alanine, as component of the cysteine desulfurase complex leading to the formation of a cysteine persulfide intermediate at the active site cysteine residue and participates in the [2Fe-2S] clusters assembly on the scaffolding protein ISCU. The persulfide is then transferred on the flexible Cys loop from the catalytic site of NFS1 to the surface of NFS1. After the NFS1-linked persulfide sulfur is transferred to one of the conserved Cys residues of the scaffold, a reaction assisted by FXN. The core iron-sulfur cluster (ISC) assembly complex is involved in the de novo synthesis of a [2Fe-2S] cluster, the first step of the mitochondrial iron-sulfur protein biogenesis. This process is initiated by the cysteine desulfurase complex (NFS1:LYRM4:NDUFAB1) that produces persulfide which is delivered on the scaffold protein ISCU in a FXN-dependent manner. Then this complex is stabilized by FDX2 which provides reducing equivalents to accomplish the [2Fe-2S] cluster assembly. Finally, the [2Fe-2S] cluster is transferred from ISCU to chaperone proteins, including HSCB, HSPA9 and GLRX5. May catalyze the desulfuration of L-cysteine to L-alanine as component of the cysteine desulfurase complex (NFS1:LYRM4), leading to the formation of a cysteine persulfide intermediate. Acts as a sulfur donor for MOCS3 by transferring the sulfur of the cysteine persulfide intermediate on MOCS3. The sequence is that of Cysteine desulfurase from Rattus norvegicus (Rat).